Reading from the N-terminus, the 97-residue chain is Zinc metalloproteinase-disintegrin-like bothrojarin-4 (97 aa).

Positions 4–90 constitute a Disintegrin domain; sequence PPVCGNYFVE…DCPTDRFRRN (87 aa). Positions 6, 9, 11, 13, 16, and 19 each coordinate Ca(2+). 7 disulfides stabilise this stretch: Cys-7/Cys-36, Cys-18/Cys-31, Cys-20/Cys-26, Cys-30/Cys-53, Cys-44/Cys-50, Cys-49/Cys-75, and Cys-62/Cys-82. Residue Asn-32 is glycosylated (N-linked (GlcNAc...) asparagine). Positions 68–70 match the D/ECD-tripeptide; atypical (KCD) motif; that stretch reads KCD.

It belongs to the venom metalloproteinase (M12B) family. P-III subfamily. P-IIIa sub-subfamily. Monomer. Zn(2+) is required as a cofactor. Expressed by the venom gland.

The protein localises to the secreted. In terms of biological role, the hemorrhagic metalloproteinase-disintegrin-like bothrojarin-1 is a potent inhibitor of collagen-induced platelet aggregation by blockage of alpha-2/beta-1 (ITGA2/ITGB1) integrin. It does not present any fibrinogen-clotting activity. The sequence is that of Zinc metalloproteinase-disintegrin-like bothrojarin-4 from Bothrops jararaca (Jararaca).